Here is a 443-residue protein sequence, read N- to C-terminus: Trihelix transcription factor ASIL2 (443 aa).

Positions 1-82 (MEDDEDIRSQ…RPTGGGGRED (82 aa)) are disordered. A compositionally biased stretch (polar residues) spans 38–48 (YSLTPPGNSSQ). A compositionally biased stretch (gly residues) spans 64-78 (SGGGNNSSGRPTGGG). One can recognise a Myb-like domain in the interval 84–144 (WSEAATAVLI…QCKNRIDTVK (61 aa)). Disordered stretches follow at residues 238–350 (FGGS…GNKW) and 413–443 (RRMG…LGNN). Residues 239-249 (GGSGGGGGGGS) are compositionally biased toward gly residues. Residues 271–286 (TLPQQGRTLPQQQQQG) show a composition bias toward low complexity. The short motif at 290–303 (KRCSESKRWRFRKR) is the Bipartite nuclear localization signal element. A compositionally biased stretch (basic and acidic residues) spans 333-350 (MKTEEKKKQDGDGVGNKW). Residues 360-414 (FGEAYEQTENAKLQQVVEMEKERMKFLKELELQRMQFFVKTQLEISQLKQQHGRR) adopt a coiled-coil conformation. A compositionally biased stretch (low complexity) spans 428 to 443 (NNINAIVNNNNDLGNN).

It localises to the nucleus. Transcription regulator that may repress the maturation program during early embryogenesis. This Arabidopsis thaliana (Mouse-ear cress) protein is Trihelix transcription factor ASIL2.